The chain runs to 208 residues: Uracil phosphoribosyltransferase (208 aa).

Residues Arg78, Arg103, and 130–138 (DPMLATGGS) each bind 5-phospho-alpha-D-ribose 1-diphosphate. Uracil-binding positions include Ile193 and 198-200 (GDA). Residue Asp199 participates in 5-phospho-alpha-D-ribose 1-diphosphate binding.

The protein belongs to the UPRTase family. Mg(2+) is required as a cofactor.

It carries out the reaction UMP + diphosphate = 5-phospho-alpha-D-ribose 1-diphosphate + uracil. Its pathway is pyrimidine metabolism; UMP biosynthesis via salvage pathway; UMP from uracil: step 1/1. Its activity is regulated as follows. Allosterically activated by GTP. Functionally, catalyzes the conversion of uracil and 5-phospho-alpha-D-ribose 1-diphosphate (PRPP) to UMP and diphosphate. In Mannheimia succiniciproducens (strain KCTC 0769BP / MBEL55E), this protein is Uracil phosphoribosyltransferase.